Here is a 196-residue protein sequence, read N- to C-terminus: Small ribosomal subunit protein uS4c (196 aa).

The interval 15-43 (LGALPGLTRKTPKSGSNQKKKFHSGKKEQ) is disordered. Residues 89–150 (MRLDNILFRL…NQRSKRLVQN (62 aa)) form the S4 RNA-binding domain.

The protein belongs to the universal ribosomal protein uS4 family. In terms of assembly, part of the 30S ribosomal subunit. Contacts protein S5. The interaction surface between S4 and S5 is involved in control of translational fidelity.

The protein resides in the plastid. It localises to the chloroplast. In terms of biological role, one of the primary rRNA binding proteins, it binds directly to 16S rRNA where it nucleates assembly of the body of the 30S subunit. Its function is as follows. With S5 and S12 plays an important role in translational accuracy. The sequence is that of Small ribosomal subunit protein uS4c (rps4) from Bothriochloa ischaemum (Yellow bluestem).